Here is a 221-residue protein sequence, read N- to C-terminus: MPGTSELITVAVPKGRLLQESSALFERALGVSPRKLLEGTRKLAADAPEAGLRFISIRAGDVASYVEHGAAEVGIVGLDVLREEPRDLYEPLDLGIGRCTVIVARPKGARPLPRGVAPRVATKYLSLAARHFAAKGVPAEIIPLHGSIEVAPSLGLADTIVDITETGETLRANGLVIEEKVLEVSARLVVNRVALKLHPERLRRLIEALRAAVAEAGAEAR.

The protein belongs to the ATP phosphoribosyltransferase family. Short subfamily. Heteromultimer composed of HisG and HisZ subunits.

The protein localises to the cytoplasm. It catalyses the reaction 1-(5-phospho-beta-D-ribosyl)-ATP + diphosphate = 5-phospho-alpha-D-ribose 1-diphosphate + ATP. It participates in amino-acid biosynthesis; L-histidine biosynthesis; L-histidine from 5-phospho-alpha-D-ribose 1-diphosphate: step 1/9. In terms of biological role, catalyzes the condensation of ATP and 5-phosphoribose 1-diphosphate to form N'-(5'-phosphoribosyl)-ATP (PR-ATP). Has a crucial role in the pathway because the rate of histidine biosynthesis seems to be controlled primarily by regulation of HisG enzymatic activity. The chain is ATP phosphoribosyltransferase from Anaeromyxobacter dehalogenans (strain 2CP-1 / ATCC BAA-258).